Here is a 282-residue protein sequence, read N- to C-terminus: Phosphatidylserine decarboxylase proenzyme (282 aa).

Residues Asp89, His145, and Ser249 each act as charge relay system; for autoendoproteolytic cleavage activity in the active site. The Schiff-base intermediate with substrate; via pyruvic acid; for decarboxylase activity role is filled by Ser249. The residue at position 249 (Ser249) is a Pyruvic acid (Ser); by autocatalysis.

It belongs to the phosphatidylserine decarboxylase family. PSD-B subfamily. Prokaryotic type I sub-subfamily. As to quaternary structure, heterodimer of a large membrane-associated beta subunit and a small pyruvoyl-containing alpha subunit. Requires pyruvate as cofactor. In terms of processing, is synthesized initially as an inactive proenzyme. Formation of the active enzyme involves a self-maturation process in which the active site pyruvoyl group is generated from an internal serine residue via an autocatalytic post-translational modification. Two non-identical subunits are generated from the proenzyme in this reaction, and the pyruvate is formed at the N-terminus of the alpha chain, which is derived from the carboxyl end of the proenzyme. The autoendoproteolytic cleavage occurs by a canonical serine protease mechanism, in which the side chain hydroxyl group of the serine supplies its oxygen atom to form the C-terminus of the beta chain, while the remainder of the serine residue undergoes an oxidative deamination to produce ammonia and the pyruvoyl prosthetic group on the alpha chain. During this reaction, the Ser that is part of the protease active site of the proenzyme becomes the pyruvoyl prosthetic group, which constitutes an essential element of the active site of the mature decarboxylase.

Its subcellular location is the cell membrane. The enzyme catalyses a 1,2-diacyl-sn-glycero-3-phospho-L-serine + H(+) = a 1,2-diacyl-sn-glycero-3-phosphoethanolamine + CO2. Its pathway is phospholipid metabolism; phosphatidylethanolamine biosynthesis; phosphatidylethanolamine from CDP-diacylglycerol: step 2/2. Catalyzes the formation of phosphatidylethanolamine (PtdEtn) from phosphatidylserine (PtdSer). In Anaeromyxobacter sp. (strain K), this protein is Phosphatidylserine decarboxylase proenzyme.